Here is a 283-residue protein sequence, read N- to C-terminus: NAD kinase (283 aa).

Residue D66 is the Proton acceptor of the active site. NAD(+) is bound by residues 66–67 (DG), R71, 137–138 (ND), H165, D167, and 178–183 (TGYSMS).

The protein belongs to the NAD kinase family. A divalent metal cation is required as a cofactor.

It is found in the cytoplasm. The enzyme catalyses NAD(+) + ATP = ADP + NADP(+) + H(+). Involved in the regulation of the intracellular balance of NAD and NADP, and is a key enzyme in the biosynthesis of NADP. Catalyzes specifically the phosphorylation on 2'-hydroxyl of the adenosine moiety of NAD to yield NADP. The sequence is that of NAD kinase from Agathobacter rectalis (strain ATCC 33656 / DSM 3377 / JCM 17463 / KCTC 5835 / VPI 0990) (Eubacterium rectale).